The following is a 190-amino-acid chain: Cell division protein SepF (190 aa).

It belongs to the SepF family. As to quaternary structure, homodimer. Interacts with FtsZ.

The protein localises to the cytoplasm. Functionally, cell division protein that is part of the divisome complex and is recruited early to the Z-ring. Probably stimulates Z-ring formation, perhaps through the cross-linking of FtsZ protofilaments. Its function overlaps with FtsA. The chain is Cell division protein SepF from Synechococcus sp. (strain WH7803).